Here is a 402-residue protein sequence, read N- to C-terminus: Argininosuccinate synthase (402 aa).

Residue 9–17 (AYSGGLDTS) participates in ATP binding. An L-citrulline-binding site is contributed by Tyr86. An ATP-binding site is contributed by Gly116. 3 residues coordinate L-aspartate: Thr118, Asn122, and Asp123. L-citrulline is bound at residue Asn122. 5 residues coordinate L-citrulline: Arg126, Ser174, Ser183, Glu259, and Tyr271.

This sequence belongs to the argininosuccinate synthase family. Type 1 subfamily. In terms of assembly, homotetramer.

Its subcellular location is the cytoplasm. It catalyses the reaction L-citrulline + L-aspartate + ATP = 2-(N(omega)-L-arginino)succinate + AMP + diphosphate + H(+). The protein operates within amino-acid biosynthesis; L-arginine biosynthesis; L-arginine from L-ornithine and carbamoyl phosphate: step 2/3. The polypeptide is Argininosuccinate synthase (Geobacillus sp. (strain WCH70)).